The chain runs to 582 residues: Protein NARROW LEAF 1 (582 aa).

Disordered regions lie at residues 1–26 (MKPS…VDHQ) and 531–582 (GMSP…DLEK). Residues 562 to 572 (LGDREPKRLRS) show a composition bias toward basic and acidic residues. A Nuclear localization signal motif is present at residues 567–573 (PKRLRSD). Residues 573–582 (DSGSSLDLEK) are compositionally biased toward low complexity.

Expressed in leaf sheaths, leaf blades, culms and panicles. Preferentially expressed in vascular tissues in leaves and culms.

It is found in the nucleus. The protein resides in the nucleoplasm. Its subcellular location is the cytoplasm. In terms of biological role, involved in the regulation of lateral leaf growth. May be involved in the regulation of basipetal polar auxin transport (PAT) and vascular patterning in leaves. Controls photosynthesis rate by regulating carboxylation efficiency and consequently photosynthesis rate. Controls panicle and spikelet numbers, and grain yield. This is Protein NARROW LEAF 1 from Oryza sativa subsp. japonica (Rice).